A 119-amino-acid polypeptide reads, in one-letter code: Ribonuclease P protein component (119 aa).

Positions M1 to K20 are disordered.

The protein belongs to the RnpA family. In terms of assembly, consists of a catalytic RNA component (M1 or rnpB) and a protein subunit.

The enzyme catalyses Endonucleolytic cleavage of RNA, removing 5'-extranucleotides from tRNA precursor.. In terms of biological role, RNaseP catalyzes the removal of the 5'-leader sequence from pre-tRNA to produce the mature 5'-terminus. It can also cleave other RNA substrates such as 4.5S RNA. The protein component plays an auxiliary but essential role in vivo by binding to the 5'-leader sequence and broadening the substrate specificity of the ribozyme. This chain is Ribonuclease P protein component, found in Mycolicibacterium vanbaalenii (strain DSM 7251 / JCM 13017 / BCRC 16820 / KCTC 9966 / NRRL B-24157 / PYR-1) (Mycobacterium vanbaalenii).